Consider the following 116-residue polypeptide: Protein Rev (116 aa).

A phosphoserine; by host CK2 mark is found at S5 and S8. The interval 18–26 (LIKFLYQSN) is homomultimerization. Positions 23–49 (YQSNPPPNPEGTRQARRNRRRRWRERQ) are disordered. The Nuclear localization signal and RNA-binding (RRE) signature appears at 34 to 50 (TRQARRNRRRRWRERQR). The segment covering 36 to 47 (QARRNRRRRWRE) has biased composition (basic residues). The Nuclear export signal and binding to XPO1 signature appears at 73-84 (LQLPPLERLTLD). S92 and S99 each carry phosphoserine; by host.

The protein belongs to the HIV-1 REV protein family. As to quaternary structure, homomultimer; when bound to the RRE. Multimeric assembly is essential for activity and may involve XPO1. Binds to human KPNB1, XPO1, TNPO1, RANBP5 and IPO7. Interacts with the viral Integrase. Interacts with human KHDRBS1. Interacts with human NAP1; this interaction decreases Rev multimerization and stimulates its activity. Interacts with human DEAD-box helicases DDX3 and DDX24; these interactions may serve for viral RNA export to the cytoplasm and packaging, respectively. Interacts with human PSIP1; this interaction may inhibit HIV-1 DNA integration by promoting dissociation of the Integrase-LEDGF/p75 complex. Post-translationally, asymmetrically arginine dimethylated at one site by host PRMT6. Methylation impairs the RNA-binding activity and export of viral RNA from the nucleus to the cytoplasm. Phosphorylated by protein kinase CK2. Presence of, and maybe binding to the N-terminus of the regulatory beta subunit of CK2 is necessary for CK2-mediated Rev's phosphorylation.

It is found in the host nucleus. It localises to the host nucleolus. The protein resides in the host cytoplasm. In terms of biological role, escorts unspliced or incompletely spliced viral pre-mRNAs (late transcripts) out of the nucleus of infected cells. These pre-mRNAs carry a recognition sequence called Rev responsive element (RRE) located in the env gene, that is not present in fully spliced viral mRNAs (early transcripts). This function is essential since most viral proteins are translated from unspliced or partially spliced pre-mRNAs which cannot exit the nucleus by the pathway used by fully processed cellular mRNAs. Rev itself is translated from a fully spliced mRNA that readily exits the nucleus. Rev's nuclear localization signal (NLS) binds directly to KPNB1/Importin beta-1 without previous binding to KPNA1/Importin alpha-1. KPNB1 binds to the GDP bound form of RAN (Ran-GDP) and targets Rev to the nucleus. In the nucleus, the conversion from Ran-GDP to Ran-GTP dissociates Rev from KPNB1 and allows Rev's binding to the RRE in viral pre-mRNAs. Rev multimerization on the RRE via cooperative assembly exposes its nuclear export signal (NES) to the surface. Rev can then form a complex with XPO1/CRM1 and Ran-GTP, leading to nuclear export of the complex. Conversion from Ran-GTP to Ran-GDP mediates dissociation of the Rev/RRE/XPO1/RAN complex, so that Rev can return to the nucleus for a subsequent round of export. Beside KPNB1, also seems to interact with TNPO1/Transportin-1, RANBP5/IPO5 and IPO7/RANBP7 for nuclear import. The nucleoporin-like HRB/RIP is an essential cofactor that probably indirectly interacts with Rev to release HIV RNAs from the perinuclear region to the cytoplasm. The protein is Protein Rev of Human immunodeficiency virus type 1 group M subtype B (isolate PCV12) (HIV-1).